Here is a 288-residue protein sequence, read N- to C-terminus: ATP synthase gamma chain (288 aa).

The protein belongs to the ATPase gamma chain family. In terms of assembly, F-type ATPases have 2 components, CF(1) - the catalytic core - and CF(0) - the membrane proton channel. CF(1) has five subunits: alpha(3), beta(3), gamma(1), delta(1), epsilon(1). CF(0) has three main subunits: a, b and c.

The protein localises to the cell inner membrane. Functionally, produces ATP from ADP in the presence of a proton gradient across the membrane. The gamma chain is believed to be important in regulating ATPase activity and the flow of protons through the CF(0) complex. The sequence is that of ATP synthase gamma chain from Acidovorax ebreus (strain TPSY) (Diaphorobacter sp. (strain TPSY)).